The chain runs to 667 residues: uncharacterized protein (667 aa).

This is an uncharacterized protein from Magallana gigas (Pacific oyster).